We begin with the raw amino-acid sequence, 112 residues long: ATP synthase epsilon chain (112 aa).

It belongs to the ATPase epsilon chain family. In terms of assembly, F-type ATPases have 2 components, CF(1) - the catalytic core - and CF(0) - the membrane proton channel. CF(1) has five subunits: alpha(3), beta(3), gamma(1), delta(1), epsilon(1). CF(0) has three main subunits: a, b and c.

Its subcellular location is the cell inner membrane. Its function is as follows. Produces ATP from ADP in the presence of a proton gradient across the membrane. In Rickettsia conorii (strain ATCC VR-613 / Malish 7), this protein is ATP synthase epsilon chain (atpC).